Here is a 535-residue protein sequence, read N- to C-terminus: uncharacterized protein (535 aa).

A helical membrane pass occupies residues 17–37; that stretch reads IVLLCMIGFFCTTFMRIHFAL. N-linked (GlcNAc...) asparagine glycans are attached at residues Asn-44 and Asn-61. The next 6 helical transmembrane spans lie at 107 to 127, 144 to 164, 167 to 187, 199 to 219, 225 to 245, and 292 to 312; these read LIFS…MFFI, ILVT…SVFL, IGMG…IGNW, IFTL…AAVC, WPAT…LWFF, and AFLG…LFQI. The N-linked (GlcNAc...) asparagine glycan is linked to Asn-329. 5 helical membrane-spanning segments follow: residues 331–351, 368–388, 395–415, 429–451, and 463–483; these read TFTA…GIGI, VSHG…AFFV, TGLI…SGFY, MSAI…MSMF, and IFIG…LFGS.

This sequence belongs to the major facilitator superfamily. Sodium/anion cotransporter family.

Its subcellular location is the membrane. This is an uncharacterized protein from Caenorhabditis elegans.